We begin with the raw amino-acid sequence, 822 residues long: MWGWKCLLFWAVLVTATLCTARPAPTLPEQAQPWGVPVEVESLLVHPGDLLQLRCRLRDDVQSINWLRDGVQLVESNRTRITGEEVEVRDSIPADSGLYACVTSSPSGSDTTYFSVNVSDALPSSEDDDDDDDSSSEEKETDNTKPNRRPVAPYWTSPEKMEKKLHAVPAAKTVKFKCPSSGTPNPTLRWLKNGKEFKPDHRIGGYKVRYATWSIIMDSVVPSDKGNYTCIVENEYGSINHTYQLDVVERSPHRPILQAGLPANKTVALGSNVEFMCKVYSDPQPHIQWLKHIEVNGSKIGPDNLPYVQILKTAGVNTTDKEMEVLHLRNVSFEDAGEYTCLAGNSIGLSHHSAWLTVLEALEERPAVMTSPLYLEIIIYCTGAFLISCMLGSVIIYKMKSGTKKSDFHSQMAVHKLAKSIPLRRQVTVSADSSASMNSGVLLVRPSRLSSSGTPMLAGVSEYELPEDPRWELPRDRLVLGKPLGEGCFGQVVLAEAIGLDKDKPNRVTKVAVKMLKSDATEKDLSDLISEMEMMKMIGKHKNIINLLGACTQDGPLYVIVEYASKGNLREYLQARRPPGLEYCYNPSHNPEEQLSSKDLVSCAYQVARGMEYLASKKCIHRDLAARNVLVTEDNVMKIADFGLARDIHHIDYYKKTTNGRLPVKWMAPEALFDRIYTHQSDVWSFGVLLWEIFTLGGSPYPGVPVEELFKLLKEGHRMDKPSNCTNELYMMMRDCWHAVPSQRPTFKQLVEDLDRIVALTSNQEYLDLSIPLDQYSPSFPDTRSSTCSSGEDSVFSHEPLPEEPCLPRHPTQLANSGLKRR.

The signal sequence occupies residues 1–21 (MWGWKCLLFWAVLVTATLCTA). The Extracellular segment spans residues 22–376 (RPAPTLPEQA…AVMTSPLYLE (355 aa)). An Ig-like C2-type 1 domain is found at 25 to 119 (PTLPEQAQPW…DTTYFSVNVS (95 aa)). A disulfide bridge links cysteine 55 with cysteine 101. 2 N-linked (GlcNAc...) asparagine glycosylation sites follow: asparagine 77 and asparagine 117. Residues 120 to 162 (DALPSSEDDDDDDDSSSEEKETDNTKPNRRPVAPYWTSPEKME) are disordered. Residues 125–135 (SEDDDDDDDSS) are compositionally biased toward acidic residues. Over residues 136–145 (SEEKETDNTK) the composition is skewed to basic and acidic residues. Ig-like C2-type domains follow at residues 158-246 (PEKM…YQLD) and 255-357 (PILQ…AWLT). The interval 160–177 (KMEKKLHAVPAAKTVKFK) is heparin-binding. Cysteine 178 and cysteine 230 are oxidised to a cystine. N-linked (GlcNAc...) asparagine glycosylation is found at asparagine 227, asparagine 240, asparagine 264, asparagine 296, asparagine 317, and asparagine 330. Cysteines 277 and 341 form a disulfide. Residues 377 to 397 (IIIYCTGAFLISCMLGSVIIY) traverse the membrane as a helical segment. At 398-822 (KMKSGTKKSD…QLANSGLKRR (425 aa)) the chain is on the cytoplasmic side. Tyrosine 463 carries the post-translational modification Phosphotyrosine; by autocatalysis. The region spanning 478–767 (LVLGKPLGEG…VALTSNQEYL (290 aa)) is the Protein kinase domain. Residues 484–490 (LGEGCFG), lysine 514, 562–564 (EYA), and asparagine 568 contribute to the ATP site. Residues tyrosine 583 and tyrosine 585 each carry the phosphotyrosine; by autocatalysis modification. Aspartate 623 serves as the catalytic Proton acceptor. Residues arginine 627 and aspartate 641 each coordinate ATP. Residues tyrosine 653, tyrosine 654, tyrosine 730, and tyrosine 766 each carry the phosphotyrosine; by autocatalysis modification. The span at 782 to 792 (DTRSSTCSSGE) shows a compositional bias: polar residues. The interval 782–822 (DTRSSTCSSGEDSVFSHEPLPEEPCLPRHPTQLANSGLKRR) is disordered.

It belongs to the protein kinase superfamily. Tyr protein kinase family. Fibroblast growth factor receptor subfamily. Monomer. Homodimer after ligand binding. Interacts predominantly with FGF1 and FGF2, but can also interact with FGF3, FGF4, FGF5, FGF6, FGF8, FGF10, FGF19, FGF21, FGF22 and FGF23 (in vitro). Ligand specificity is determined by tissue-specific expression of isoforms, and differences in the third Ig-like domain are crucial for ligand specificity. Affinity for fibroblast growth factors (FGFs) is increased by heparan sulfate glycosaminoglycans that function as coreceptors. Likewise, KLB increases the affinity for FGF19, FGF21 and FGF23. Interacts (phosphorylated on Tyr-766) with PLCG1 (via SH2 domains). Interacts with FRS2. Interacts with RPS6KA1. Interacts (via C-terminus) with NEDD4 (via WW3 domain). Interacts with KL. Interacts with SHB (via SH2 domain). Interacts with GRB10. Interacts with ANOS1; this interaction does not interfere with FGF2-binding to FGFR1, but prevents binding of heparin-bound FGF2. Interacts with SOX2 and SOX3. Interacts with FLRT1, FLRT2 and FLRT3. Found in a ternary complex with FGF1 and ITGAV:ITGB3. In terms of processing, autophosphorylated. Binding of FGF family members together with heparan sulfate proteoglycan or heparin promotes receptor dimerization and autophosphorylation on tyrosine residues. Autophosphorylation occurs in trans between the two FGFR molecules present in the dimer and proceeds in a highly ordered manner. Initial autophosphorylation at Tyr-653 increases the kinase activity by a factor of 50 to 100. After this, Tyr-583 becomes phosphorylated, followed by phosphorylation of Tyr-463, Tyr-766, Tyr-583 and Tyr-585. In a third stage, Tyr-654 is autophosphorylated, resulting in a further tenfold increase of kinase activity. Phosphotyrosine residues provide docking sites for interacting proteins and so are crucial for FGFR1 function and its regulation. Ubiquitinated. FGFR1 is rapidly ubiquitinated by NEDD4 after autophosphorylation, leading to internalization and lysosomal degradation. CBL is recruited to activated FGFR1 via FRS2 and GRB2, and mediates ubiquitination and subsequent degradation of FGFR1. Post-translationally, N-glycosylated in the endoplasmic reticulum. The N-glycan chains undergo further maturation to an Endo H-resistant form in the Golgi apparatus. In terms of tissue distribution, widely expressed.

It localises to the cell membrane. It is found in the nucleus. Its subcellular location is the cytoplasm. The protein resides in the cytosol. The protein localises to the cytoplasmic vesicle. The enzyme catalyses L-tyrosyl-[protein] + ATP = O-phospho-L-tyrosyl-[protein] + ADP + H(+). Its activity is regulated as follows. Present in an inactive conformation in the absence of bound ligand. Ligand binding leads to dimerization and activation by sequential autophosphorylation on tyrosine residues. Functionally, tyrosine-protein kinase that acts as a cell-surface receptor for fibroblast growth factors and plays an essential role in the regulation of embryonic development, cell proliferation, differentiation and migration. Required for normal mesoderm patterning and correct axial organization during embryonic development, normal skeletogenesis and normal development of the gonadotropin-releasing hormone (GnRH) neuronal system. Phosphorylates PLCG1, FRS2, GAB1 and SHB. Ligand binding leads to the activation of several signaling cascades. Activation of PLCG1 leads to the production of the cellular signaling molecules diacylglycerol and inositol 1,4,5-trisphosphate. Phosphorylation of FRS2 triggers recruitment of GRB2, GAB1, PIK3R1 and SOS1, and mediates activation of RAS, MAPK1/ERK2, MAPK3/ERK1 and the MAP kinase signaling pathway, as well as of the AKT1 signaling pathway. Promotes phosphorylation of SHC1, STAT1 and PTPN11/SHP2. In the nucleus, enhances RPS6KA1 and CREB1 activity and contributes to the regulation of transcription. FGFR1 signaling is down-regulated by IL17RD/SEF, and by FGFR1 ubiquitination, internalization and degradation. The chain is Fibroblast growth factor receptor 1 (Fgfr1) from Mus musculus (Mouse).